The chain runs to 181 residues: ATP-dependent protease subunit HslV (181 aa).

The active site involves T7. The Na(+) site is built by A162, C165, and T168.

The protein belongs to the peptidase T1B family. HslV subfamily. A double ring-shaped homohexamer of HslV is capped on each side by a ring-shaped HslU homohexamer. The assembly of the HslU/HslV complex is dependent on binding of ATP.

The protein localises to the cytoplasm. The enzyme catalyses ATP-dependent cleavage of peptide bonds with broad specificity.. With respect to regulation, allosterically activated by HslU binding. Protease subunit of a proteasome-like degradation complex believed to be a general protein degrading machinery. The sequence is that of ATP-dependent protease subunit HslV from Coxiella burnetii (strain Dugway 5J108-111).